The primary structure comprises 149 residues: Large ribosomal subunit protein bL9 (149 aa).

It belongs to the bacterial ribosomal protein bL9 family.

In terms of biological role, binds to the 23S rRNA. This is Large ribosomal subunit protein bL9 from Mycoplasma pneumoniae (strain ATCC 29342 / M129 / Subtype 1) (Mycoplasmoides pneumoniae).